Here is a 270-residue protein sequence, read N- to C-terminus: Hydroxyethylthiazole kinase (270 aa).

Met-46 lines the substrate pocket. Positions 120 and 166 each coordinate ATP. Gly-193 contributes to the substrate binding site.

This sequence belongs to the Thz kinase family. Mg(2+) is required as a cofactor.

It catalyses the reaction 5-(2-hydroxyethyl)-4-methylthiazole + ATP = 4-methyl-5-(2-phosphooxyethyl)-thiazole + ADP + H(+). The protein operates within cofactor biosynthesis; thiamine diphosphate biosynthesis; 4-methyl-5-(2-phosphoethyl)-thiazole from 5-(2-hydroxyethyl)-4-methylthiazole: step 1/1. In terms of biological role, catalyzes the phosphorylation of the hydroxyl group of 4-methyl-5-beta-hydroxyethylthiazole (THZ). This chain is Hydroxyethylthiazole kinase, found in Herpetosiphon aurantiacus (strain ATCC 23779 / DSM 785 / 114-95).